The primary structure comprises 425 residues: UDP-N-acetylglucosamine 1-carboxyvinyltransferase (425 aa).

22–23 (KN) serves as a coordination point for phosphoenolpyruvate. Position 98 (Arg-98) interacts with UDP-N-acetyl-alpha-D-glucosamine. Cys-122 (proton donor) is an active-site residue. At Cys-122 the chain carries 2-(S-cysteinyl)pyruvic acid O-phosphothioketal. Residues 127-131 (RPVDQ), Asp-313, and Ile-335 each bind UDP-N-acetyl-alpha-D-glucosamine.

It belongs to the EPSP synthase family. MurA subfamily.

It localises to the cytoplasm. The enzyme catalyses phosphoenolpyruvate + UDP-N-acetyl-alpha-D-glucosamine = UDP-N-acetyl-3-O-(1-carboxyvinyl)-alpha-D-glucosamine + phosphate. It functions in the pathway cell wall biogenesis; peptidoglycan biosynthesis. In terms of biological role, cell wall formation. Adds enolpyruvyl to UDP-N-acetylglucosamine. The protein is UDP-N-acetylglucosamine 1-carboxyvinyltransferase of Xylella fastidiosa (strain M12).